We begin with the raw amino-acid sequence, 384 residues long: 3,7-dimethylxanthine N-methyltransferase 2 (384 aa).

Residues Tyr18, Cys61, Asn66, Asp100, Leu101, Ser139, Phe140, and Cys156 each contribute to the S-adenosyl-L-homocysteine site. Tyr157 is a binding site for theobromine. S-adenosyl-L-homocysteine is bound at residue Cys158. Theobromine contacts are provided by His160 and Trp161. Asn178 is a Mg(2+) binding site. Ser237 contacts theobromine. Asp260, Phe262, and Asn263 together coordinate Mg(2+). Tyr368 lines the theobromine pocket.

This sequence belongs to the methyltransferase superfamily. Type-7 methyltransferase family. Mg(2+) is required as a cofactor. Highly expressed in developing endosperm. Detected in young leaves and flower buds. Present in immature fruits (grains), but barely in mature fruits.

The enzyme catalyses 7-methylxanthine + S-adenosyl-L-methionine = theobromine + S-adenosyl-L-homocysteine + H(+). The catalysed reaction is theobromine + S-adenosyl-L-methionine = caffeine + S-adenosyl-L-homocysteine + H(+). It catalyses the reaction 1,7-dimethylxanthine + S-adenosyl-L-methionine = caffeine + S-adenosyl-L-homocysteine + H(+). It functions in the pathway alkaloid biosynthesis. Involved in the biosynthesis of caffeine. Catalyzes the conversion of 7-methylxanthine (7mX) to theobromine and of theobromine to caffeine. Has 1-N-methylation activity. The protein is 3,7-dimethylxanthine N-methyltransferase 2 of Coffea arabica (Arabian coffee).